An 87-amino-acid polypeptide reads, in one-letter code: Pyocin-S2 immunity protein (87 aa).

This sequence belongs to the colicins ColE2/ColE8/ColE9 and pyocins S1/S2 family.

This is Pyocin-S2 immunity protein (imm2) from Pseudomonas aeruginosa (strain ATCC 15692 / DSM 22644 / CIP 104116 / JCM 14847 / LMG 12228 / 1C / PRS 101 / PAO1).